A 462-amino-acid chain; its full sequence is Argininosuccinate lyase 2 (462 aa).

It belongs to the lyase 1 family. Argininosuccinate lyase subfamily.

The protein resides in the cytoplasm. It catalyses the reaction 2-(N(omega)-L-arginino)succinate = fumarate + L-arginine. The protein operates within amino-acid biosynthesis; L-arginine biosynthesis; L-arginine from L-ornithine and carbamoyl phosphate: step 3/3. The polypeptide is Argininosuccinate lyase 2 (Shouchella clausii (strain KSM-K16) (Alkalihalobacillus clausii)).